Consider the following 386-residue polypeptide: Aspartate carbamoyltransferase 1, chloroplastic (386 aa).

A chloroplast-targeting transit peptide spans 1–39 (MTVASMLSSNSMNVGVSNPKMSSKTSACCLLNRPWPSSC). Residues Arg-132 and Thr-133 each contribute to the carbamoyl phosphate site. Residues Arg-132 and Thr-133 each contribute to the UMP site. Lys-162 provides a ligand contact to L-aspartate. Positions 183, 211, and 214 each coordinate carbamoyl phosphate. Arg-183 and His-211 together coordinate UMP. UMP is bound by residues Arg-244 and Arg-306. The L-aspartate site is built by Arg-244 and Arg-306. Carbamoyl phosphate contacts are provided by Leu-346 and Pro-347.

The protein belongs to the aspartate/ornithine carbamoyltransferase superfamily. ATCase family. In terms of assembly, homotrimer.

It localises to the plastid. The protein resides in the chloroplast. The enzyme catalyses carbamoyl phosphate + L-aspartate = N-carbamoyl-L-aspartate + phosphate + H(+). The protein operates within pyrimidine metabolism; UMP biosynthesis via de novo pathway; (S)-dihydroorotate from bicarbonate: step 2/3. Feedback inhibited by UMP. In terms of biological role, catalyzes the condensation of carbamoyl phosphate and aspartate to form carbamoyl aspartate and inorganic phosphate, the committed step in the de novo pyrimidine nucleotide biosynthesis pathway. In Pisum sativum (Garden pea), this protein is Aspartate carbamoyltransferase 1, chloroplastic (PYRB1).